The sequence spans 429 residues: Putative pentatricopeptide repeat-containing protein At1g03510 (429 aa).

10 PPR repeats span residues 11 to 45 (KLISLTKQLSSYANQGNHEQALNLFLQMHSSFALP), 47 to 81 (DAHVFSLALKSCAAAFRPVLGGSVHAHSVKSNFLS), 82 to 112 (NPFVGCALLDMYGKCLSVSHARKLFDEIPQR), 113 to 147 (NAVVWNAMISHYTHCGKVKEAVELYEAMDVMPNES), 148 to 180 (SFNAIIKGLVGTEDGSYRAIEFYRKMIEFRFKP), 181 to 215 (NLITLLALVSACSAIGAFRLIKEIHSYAFRNLIEP), 216 to 246 (HPQLKSGLVEAYGRCGSIVYVQLVFDSMEDR), 247 to 281 (DVVAWSSLISAYALHGDAESALKTFQEMELAKVTP), 282 to 312 (DDIAFLNVLKACSHAGLADEALVYFKRMQGD), and 318 to 348 (SKDHYSCLVDVLSRVGRFEEAYKVIQAMPEK). The tract at residues 353 to 428 (TWGALLGACR…SPGSSWCLFK (76 aa)) is type E motif.

It belongs to the PPR family. PCMP-E subfamily.

In Arabidopsis thaliana (Mouse-ear cress), this protein is Putative pentatricopeptide repeat-containing protein At1g03510 (PCMP-E3).